The primary structure comprises 284 residues: Ribosome-associated protein oga1 (284 aa).

The tract at residues 1 to 284 (MSVASKNLFD…LSETDFPALA (284 aa)) is disordered. The span at 22-36 (TEKKTAASRDKKRSD) shows a compositional bias: basic and acidic residues. Phosphoserine is present on residues Ser37 and Ser51. Composition is skewed to basic and acidic residues over residues 52 to 73 (RKRD…ADQP) and 119 to 141 (GREF…ERGW). At Thr160 the chain carries Phosphothreonine. Ser162 carries the post-translational modification Phosphoserine. Phosphothreonine is present on Thr166. Composition is skewed to basic and acidic residues over residues 172-186 (ENVK…ERKS) and 194-209 (TVEK…KSAP). A compositionally biased stretch (low complexity) spans 214-224 (ASLKKSASQKK). Basic and acidic residues predominate over residues 226 to 237 (AAKESKPKKVLL). Positions 245–254 (ARPARGGRPN) are enriched in low complexity. Residues 263–277 (ETASKTQQAPPTLSE) show a composition bias toward polar residues.

This sequence belongs to the STM1 family. Associates with mature 80S ribosomes. Binds to the head domain of the 40S ribosomal subunit and prevents mRNA binding by inserting its alpha-helix domain towards the mRNA entry tunnel at the decoding site, where it blocks the binding of tRNA and mRNA at the A- and P-sites. Interacts with eEF2; interaction sequesters eEF2 at the A-site of the ribosome, thereby blocking the interaction sites of the mRNA-tRNA complex, promoting ribosome stabilization and hibernation. Interacts with sad1. Post-translationally, phosphorylation by TORC1 upon nutrient replenishment inhibits STM1 and causes its release from dormant ribosomes.

Its subcellular location is the cytoplasm. In terms of biological role, ribosome preservation factor that protect a small pool of nontranslating, vacant ribosomes in cells under nutrient starvation conditions. Under nutrient-limiting conditions, cells reduce ribosome biogenesis and degrade ribosomes via autophagy (ribophagy) or proteasomal degradation. To avoid excessive degradation during starvation, STM1 binds to and protects 80S ribosomes from proteasomal degradation. Under nutrient-sufficient conditions, TORC1 phosphorylates and inhibits STM1 to prevent formation of dormant 80S ribosomes. Acts as an inhibitor of mRNA translation by promoting ribosome hibernation: clamps the two ribosomal subunits, thereby preventing their dissociation, and inhibits translation by excluding mRNA-binding. Acts via its association with eEF2, promoting ribosome stabilization and storage in an inactive state. May also repress translation by preventing association of eEF3 with ribosomes. Binds specifically G4 quadruplex (these are four-stranded right-handed helices, stabilized by guanine base quartets) and purine motif triplex (characterized by a third, antiparallel purine-rich DNA strand located within the major groove of a homopurine stretch of duplex DNA) nucleic acid structures. These structures may be present at telomeres or in rRNAs. Extends chronological lifespan when overexpressed. The sequence is that of Ribosome-associated protein oga1 from Schizosaccharomyces pombe (strain 972 / ATCC 24843) (Fission yeast).